The chain runs to 219 residues: Small ribosomal subunit protein uS3 (219 aa).

The KH type-2 domain occupies 39-107 (LRKFLKKKLH…EVLIDIQEVR (69 aa)).

The protein belongs to the universal ribosomal protein uS3 family. As to quaternary structure, part of the 30S ribosomal subunit. Forms a tight complex with proteins S10 and S14.

Binds the lower part of the 30S subunit head. Binds mRNA in the 70S ribosome, positioning it for translation. This Desulfatibacillum aliphaticivorans protein is Small ribosomal subunit protein uS3.